Reading from the N-terminus, the 81-residue chain is uncharacterized protein (81 aa).

Positions 1–16 (MNRLTFYGLCLSGAVG) are cleaved as a signal peptide. The segment at 55–81 (TIDPHHNHHDDHHDSHGHGHGKIKGHH) is disordered. The span at 57–71 (DPHHNHHDDHHDSHG) shows a compositional bias: basic and acidic residues. The span at 72–81 (HGHGKIKGHH) shows a compositional bias: basic residues.

The protein localises to the secreted. This is an uncharacterized protein from Dictyostelium discoideum (Social amoeba).